The following is a 95-amino-acid chain: Sec-independent protein translocase protein TatA (95 aa).

A helical membrane pass occupies residues Met-1–Gly-21. Residues Gly-42–Val-95 form a disordered region.

This sequence belongs to the TatA/E family. In terms of assembly, the Tat system comprises two distinct complexes: a TatABC complex, containing multiple copies of TatA, TatB and TatC subunits, and a separate TatA complex, containing only TatA subunits. Substrates initially bind to the TatABC complex, which probably triggers association of the separate TatA complex to form the active translocon.

The protein resides in the cell inner membrane. In terms of biological role, part of the twin-arginine translocation (Tat) system that transports large folded proteins containing a characteristic twin-arginine motif in their signal peptide across membranes. TatA could form the protein-conducting channel of the Tat system. In Methylorubrum extorquens (strain CM4 / NCIMB 13688) (Methylobacterium extorquens), this protein is Sec-independent protein translocase protein TatA.